The sequence spans 440 residues: Ribosomal protein uS12 methylthiotransferase RimO (440 aa).

The MTTase N-terminal domain maps to Pro6 to Pro116. Cys15, Cys51, Cys80, Cys149, Cys153, and Cys156 together coordinate [4Fe-4S] cluster. The 240-residue stretch at Leu135 to Arg374 folds into the Radical SAM core domain. Residues Gln376–Val440 enclose the TRAM domain.

This sequence belongs to the methylthiotransferase family. RimO subfamily. [4Fe-4S] cluster is required as a cofactor.

It is found in the cytoplasm. It carries out the reaction L-aspartate(89)-[ribosomal protein uS12]-hydrogen + (sulfur carrier)-SH + AH2 + 2 S-adenosyl-L-methionine = 3-methylsulfanyl-L-aspartate(89)-[ribosomal protein uS12]-hydrogen + (sulfur carrier)-H + 5'-deoxyadenosine + L-methionine + A + S-adenosyl-L-homocysteine + 2 H(+). Functionally, catalyzes the methylthiolation of an aspartic acid residue of ribosomal protein uS12. The polypeptide is Ribosomal protein uS12 methylthiotransferase RimO (Ectopseudomonas mendocina (strain ymp) (Pseudomonas mendocina)).